A 277-amino-acid polypeptide reads, in one-letter code: Putative endonuclease (277 aa).

Its function is as follows. Putative endonuclease. In Escherichia coli (Enterobacteria phage T5), this protein is Putative endonuclease.